Reading from the N-terminus, the 309-residue chain is tRNA dimethylallyltransferase (309 aa).

14-21 contacts ATP; it reads GPTASGKS. 16–21 lines the substrate pocket; the sequence is TASGKS. The interval 39–42 is interaction with substrate tRNA; it reads DSMQ.

This sequence belongs to the IPP transferase family. Monomer. The cofactor is Mg(2+).

It catalyses the reaction adenosine(37) in tRNA + dimethylallyl diphosphate = N(6)-dimethylallyladenosine(37) in tRNA + diphosphate. Catalyzes the transfer of a dimethylallyl group onto the adenine at position 37 in tRNAs that read codons beginning with uridine, leading to the formation of N6-(dimethylallyl)adenosine (i(6)A). The protein is tRNA dimethylallyltransferase of Geobacter metallireducens (strain ATCC 53774 / DSM 7210 / GS-15).